Reading from the N-terminus, the 301-residue chain is LHMIHLHWYQYPPMNPMMYPLLLIFMLFTGILCLAGNFVTIWVFMNTKSLRTPANLLVVNLAMSDFLMMFTMFPPMMVTCYYHTWTLGPTFCQVYAFLGNLCGCASIWTMVFITFDRYNVIVKGVAGEPLSTKKASLWILTIWVLSTTWCIAPFFGWNHYVPEGNLTGCGTDYLSEDILSRSYLYVYSTWVYFLPLAITIYCYVFIIKAVAAHEKGMRDQAKKMGIKSLRNEEAQKTSAECRLAKIAMTTVALWFIAWTPCLLINWVGMFARSYLSPVYTIWGYVFAKANAVYNPIVYAIS.

Residues 1-18 (LHMIHLHWYQYPPMNPMM) are Extracellular-facing. A helical membrane pass occupies residues 19-43 (YPLLLIFMLFTGILCLAGNFVTIWV). Residues 44-55 (FMNTKSLRTPAN) lie on the Cytoplasmic side of the membrane. A helical transmembrane segment spans residues 56–78 (LLVVNLAMSDFLMMFTMFPPMMV). Topologically, residues 79 to 92 (TCYYHTWTLGPTFC) are extracellular. The cysteines at positions 92 and 169 are disulfide-linked. Residues 93 to 115 (QVYAFLGNLCGCASIWTMVFITF) traverse the membrane as a helical segment. The 'Ionic lock' involved in activated form stabilization signature appears at 116 to 118 (DRY). Residues 116 to 134 (DRYNVIVKGVAGEPLSTKK) are Cytoplasmic-facing. Residues 135–155 (ASLWILTIWVLSTTWCIAPFF) form a helical membrane-spanning segment. The Extracellular segment spans residues 156–182 (GWNHYVPEGNLTGCGTDYLSEDILSRS). N-linked (GlcNAc...) asparagine glycosylation is present at asparagine 165. A helical transmembrane segment spans residues 183-204 (YLYVYSTWVYFLPLAITIYCYV). Residues 205–245 (FIIKAVAAHEKGMRDQAKKMGIKSLRNEEAQKTSAECRLAK) lie on the Cytoplasmic side of the membrane. Residues 246–267 (IAMTTVALWFIAWTPCLLINWV) traverse the membrane as a helical segment. Topologically, residues 268-278 (GMFARSYLSPV) are extracellular. The helical transmembrane segment at 279 to 300 (YTIWGYVFAKANAVYNPIVYAI) threads the bilayer. Lysine 288 is subject to N6-(retinylidene)lysine.

The protein belongs to the G-protein coupled receptor 1 family. Opsin subfamily. In terms of assembly, homodimer. Interacts with GNAQ. Contains one covalently linked retinal chromophore.

The protein localises to the cell projection. It localises to the rhabdomere membrane. In terms of biological role, photoreceptor required for image-forming vision at low light intensity. Can use both retinal and 3-dehydroretinal as visual pigment. Light-induced isomerization of 11-cis to all-trans retinal triggers a conformational change that activates signaling via G-proteins. Signaling via GNAQ probably mediates the activation of phospholipase C. The protein is Rhodopsin (RHO) of Procambarus seminolae (Crayfish).